A 179-amino-acid chain; its full sequence is Bifunctional protein PyrR (179 aa).

The PRPP-binding motif lies at 97-109 (IILTDDVLYTGRT).

Belongs to the purine/pyrimidine phosphoribosyltransferase family. PyrR subfamily.

The enzyme catalyses UMP + diphosphate = 5-phospho-alpha-D-ribose 1-diphosphate + uracil. In terms of biological role, regulates the transcription of the pyrimidine nucleotide (pyr) operon in response to exogenous pyrimidines. Also displays a weak uracil phosphoribosyltransferase activity which is not physiologically significant. This Elusimicrobium minutum (strain Pei191) protein is Bifunctional protein PyrR.